The sequence spans 167 residues: Small ribosomal subunit protein uS5 (167 aa).

In terms of domain architecture, S5 DRBM spans 12–75 (LQEKLIAVNR…EKARRNMVTI (64 aa)).

It belongs to the universal ribosomal protein uS5 family. In terms of assembly, part of the 30S ribosomal subunit. Contacts proteins S4 and S8.

With S4 and S12 plays an important role in translational accuracy. In terms of biological role, located at the back of the 30S subunit body where it stabilizes the conformation of the head with respect to the body. This Vibrio vulnificus (strain CMCP6) protein is Small ribosomal subunit protein uS5.